Consider the following 201-residue polypeptide: 3-isopropylmalate dehydratase small subunit (201 aa).

Belongs to the LeuD family. LeuD type 1 subfamily. Heterodimer of LeuC and LeuD.

It catalyses the reaction (2R,3S)-3-isopropylmalate = (2S)-2-isopropylmalate. The protein operates within amino-acid biosynthesis; L-leucine biosynthesis; L-leucine from 3-methyl-2-oxobutanoate: step 2/4. In terms of biological role, catalyzes the isomerization between 2-isopropylmalate and 3-isopropylmalate, via the formation of 2-isopropylmaleate. The sequence is that of 3-isopropylmalate dehydratase small subunit from Paramagnetospirillum magneticum (strain ATCC 700264 / AMB-1) (Magnetospirillum magneticum).